The following is a 1023-amino-acid chain: Exportin-T (1023 aa).

Belongs to the exportin family.

The protein resides in the nucleus. The protein localises to the cytoplasm. Its function is as follows. tRNA nucleus export receptor which facilitates tRNA translocation across the nuclear pore complex. Involved in pre-tRNA splicing, probably by affecting the interaction of pre-tRNA with splicing endonuclease. The polypeptide is Exportin-T (los1) (Sclerotinia sclerotiorum (strain ATCC 18683 / 1980 / Ss-1) (White mold)).